The chain runs to 368 residues: uncharacterized protein (368 aa).

A disordered region spans residues 237–287 (ESLSIPSRRRPSSIAPIGTRPSRKEIAFSNSSTPTDQTLRPPNPPAANGNA). Residues 238–253 (SLSIPSRRRPSSIAPI) show a composition bias toward low complexity. A compositionally biased stretch (polar residues) spans 264 to 276 (FSNSSTPTDQTLR).

This is an uncharacterized protein from Schizosaccharomyces pombe (strain 972 / ATCC 24843) (Fission yeast).